The chain runs to 463 residues: Chromosomal replication initiator protein DnaA (463 aa).

Residues 1 to 83 form a domain I, interacts with DnaA modulators region; that stretch reads MSTNQIILTD…LQLFQHYNNT (83 aa). The tract at residues 83-124 is domain II; that stretch reads TIKSIEIITKELPGTTQTVIELPTKTFADIGSSELNSENIFS. Residues 125–343 form a domain III, AAA+ region region; sequence TLDVRFTFDN…GALNKVIAHS (219 aa). ATP contacts are provided by G171, G173, K174, and T175. A domain IV, binds dsDNA region spans residues 344-463; the sequence is NFTLKEITLE…INLLMKILQN (120 aa).

Belongs to the DnaA family. In terms of assembly, oligomerizes as a right-handed, spiral filament on DNA at oriC.

It localises to the cytoplasm. Plays an essential role in the initiation and regulation of chromosomal replication. ATP-DnaA binds to the origin of replication (oriC) to initiate formation of the DNA replication initiation complex once per cell cycle. Binds the DnaA box (a 9 base pair repeat at the origin) and separates the double-stranded (ds)DNA. Forms a right-handed helical filament on oriC DNA; dsDNA binds to the exterior of the filament while single-stranded (ss)DNA is stabiized in the filament's interior. The ATP-DnaA-oriC complex binds and stabilizes one strand of the AT-rich DNA unwinding element (DUE), permitting loading of DNA polymerase. After initiation quickly degrades to an ADP-DnaA complex that is not apt for DNA replication. Binds acidic phospholipids. This is Chromosomal replication initiator protein DnaA from Rickettsia felis (strain ATCC VR-1525 / URRWXCal2) (Rickettsia azadi).